A 109-amino-acid chain; its full sequence is UPF0060 membrane protein PCC8801_1733 (109 aa).

4 consecutive transmembrane segments (helical) span residues 7 to 27 (LLYF…VWLW), 36 to 56 (YALL…LQTA), 58 to 78 (FGRV…LWGW), and 87 to 107 (SYDW…MYAP).

This sequence belongs to the UPF0060 family.

The protein resides in the cell inner membrane. The chain is UPF0060 membrane protein PCC8801_1733 from Rippkaea orientalis (strain PCC 8801 / RF-1) (Cyanothece sp. (strain PCC 8801)).